A 393-amino-acid polypeptide reads, in one-letter code: Short-chain dehydrogenase/reductase family 42E member 1 (393 aa).

The active-site Proton acceptor is the Tyr152. Residue Lys156 participates in NAD(+) binding. Transmembrane regions (helical) follow at residues 282-302 (LPLT…FILG) and 371-391 (GLVI…SVIL).

This sequence belongs to the 3-beta-HSD family.

It localises to the membrane. The sequence is that of Short-chain dehydrogenase/reductase family 42E member 1 (SDR42E1) from Bos taurus (Bovine).